We begin with the raw amino-acid sequence, 284 residues long: Nucleoid occlusion protein (284 aa).

The segment at residues 143-162 (EALAQRVGKSQSAIANKMRL) is a DNA-binding region (H-T-H motif).

Belongs to the ParB family.

Its subcellular location is the cytoplasm. The protein resides in the nucleoid. In terms of biological role, effects nucleoid occlusion by binding relatively nonspecifically to DNA and preventing the assembly of the division machinery in the vicinity of the nucleoid, especially under conditions that disturb the cell cycle. It helps to coordinate cell division and chromosome segregation by preventing the formation of the Z ring through the nucleoid, which would cause chromosome breakage. The polypeptide is Nucleoid occlusion protein (Listeria innocua serovar 6a (strain ATCC BAA-680 / CLIP 11262)).